A 167-amino-acid polypeptide reads, in one-letter code: Phosphopantetheine adenylyltransferase (167 aa).

A substrate-binding site is contributed by Ser-10. Residues Ser-10 to Phe-11 and His-18 each bind ATP. Substrate is bound by residues Lys-42, Ala-79, and Arg-93. ATP is bound by residues Gly-94 to Arg-96, Glu-104, and Val-129 to Thr-135.

Belongs to the bacterial CoaD family. As to quaternary structure, homohexamer. Mg(2+) serves as cofactor.

Its subcellular location is the cytoplasm. It catalyses the reaction (R)-4'-phosphopantetheine + ATP + H(+) = 3'-dephospho-CoA + diphosphate. It participates in cofactor biosynthesis; coenzyme A biosynthesis; CoA from (R)-pantothenate: step 4/5. Reversibly transfers an adenylyl group from ATP to 4'-phosphopantetheine, yielding dephospho-CoA (dPCoA) and pyrophosphate. The protein is Phosphopantetheine adenylyltransferase of Beijerinckia indica subsp. indica (strain ATCC 9039 / DSM 1715 / NCIMB 8712).